Consider the following 257-residue polypeptide: Glutamate racemase (257 aa).

Substrate-binding positions include aspartate 12 to serine 13 and tyrosine 44 to glycine 45. Cysteine 75 acts as the Proton donor/acceptor in catalysis. Asparagine 76–threonine 77 contacts substrate. Cysteine 185 acts as the Proton donor/acceptor in catalysis. Residue threonine 186 to histidine 187 coordinates substrate.

Belongs to the aspartate/glutamate racemases family.

It carries out the reaction L-glutamate = D-glutamate. Its pathway is cell wall biogenesis; peptidoglycan biosynthesis. Provides the (R)-glutamate required for cell wall biosynthesis. This is Glutamate racemase from Clostridium botulinum (strain Loch Maree / Type A3).